Reading from the N-terminus, the 35-residue chain is Pheromone-binding protein 2 (35 aa).

Belongs to the PBP/GOBP family. In terms of assembly, homodimer. In terms of tissue distribution, antenna.

Functionally, this major soluble protein in olfactory sensilla of male moths might serve to solubilize the extremely hydrophobic pheromone molecules and to transport pheromone through the aqueous lymph to receptors located on olfactory cilia. In Lymantria dispar (Gypsy moth), this protein is Pheromone-binding protein 2.